We begin with the raw amino-acid sequence, 260 residues long: Indole-3-glycerol phosphate synthase (260 aa).

The protein belongs to the TrpC family.

The enzyme catalyses 1-(2-carboxyphenylamino)-1-deoxy-D-ribulose 5-phosphate + H(+) = (1S,2R)-1-C-(indol-3-yl)glycerol 3-phosphate + CO2 + H2O. Its pathway is amino-acid biosynthesis; L-tryptophan biosynthesis; L-tryptophan from chorismate: step 4/5. The sequence is that of Indole-3-glycerol phosphate synthase from Lacticaseibacillus paracasei (strain ATCC 334 / BCRC 17002 / CCUG 31169 / CIP 107868 / KCTC 3260 / NRRL B-441) (Lactobacillus paracasei).